A 92-amino-acid polypeptide reads, in one-letter code: Alpha-elapitoxin-Lh2a (92 aa).

The N-terminal stretch at Met-1–Ser-21 is a signal peptide. Disulfide bonds link Cys-24–Cys-41, Cys-34–Cys-62, Cys-47–Cys-51, Cys-66–Cys-77, and Cys-78–Cys-83.

It belongs to the three-finger toxin family. Long-chain subfamily. Type II alpha-neurotoxin sub-subfamily. Expressed by the venom gland.

The protein resides in the secreted. In terms of biological role, binds with high affinity to muscular (alpha-1/CHRNA1) and neuronal (alpha-7/CHRNA7) nicotinic acetylcholine receptor (nAChR) and inhibits acetylcholine from binding to the receptor, thereby impairing neuromuscular and neuronal transmission. The polypeptide is Alpha-elapitoxin-Lh2a (Hydrophis hardwickii (Hardwick's spine-bellied seasnake)).